A 196-amino-acid chain; its full sequence is MNIIRKLKPGTISLVLGPMFAGKTTFLIHCIYMLEHLEKKVVFIKSTKNTRDKTIKTHSGIQLRPKHCKIIESTQLSDVGSLTDIHAVVIDEAHFFDDLIKCRTWADEEKIIILAGLNASFEQKMFPPIVRIFPYCSWVKYIGRTCMKCNRHNACFNVRKNADKTLILAGGSELYVTCCNNCLKNTFIKQLQPIKY.

17–24 (GPMFAGKT) provides a ligand contact to ATP. Catalysis depends on glutamate 92, which acts as the Proton acceptor. Phenylalanine 121 is a binding site for substrate. Zn(2+) is bound by residues cysteine 146 and cysteine 149. Position 166-170 (166-170 (LILAG)) interacts with substrate. 2 residues coordinate Zn(2+): cysteine 179 and cysteine 182.

Belongs to the thymidine kinase family.

It catalyses the reaction thymidine + ATP = dTMP + ADP + H(+). Functionally, phosphorylates thymidine. ASFV replicates in the cytoplasm of infected cells and contains genes encoding a number of enzymes needed for DNA synthesis, including thymidine kinase. Important for growth in swine macrophages in vitro and is a virus virulence factor in swine. The polypeptide is Thymidine kinase (Ornithodoros (relapsing fever ticks)).